Here is a 425-residue protein sequence, read N- to C-terminus: Bifunctional phosphoribosylaminoimidazole carboxylase/phosphoribosylaminoimidazole succinocarboxamide synthetase (425 aa).

The residue at position 2 (alanine 2) is an N-acetylalanine. The tract at residues 2–260 is SAICAR synthetase domain; it reads ATAEVLNIGR…WVADRVELLL (259 aa). Residue tyrosine 22 is modified to Phosphotyrosine. Phosphoserine is present on serine 27. The residue at position 36 (lysine 36) is an N6-acetyllysine. Position 107 is a phosphoserine (serine 107). Threonine 238 is subject to Phosphothreonine. Lysine 247 bears the N6-acetyllysine mark. The segment at 261–266 is linker; sequence KSNSQC. Residues 267 to 425 are AIR carboxylase domain; it reads RVVVLMGSTS…ADKKIRECNL (159 aa). Serine 274 carries the phosphoserine modification. Serine 332 serves as a coordination point for CO2.

This sequence in the N-terminal section; belongs to the SAICAR synthetase family. The protein in the C-terminal section; belongs to the AIR carboxylase family. Class II subfamily. Homooctamer.

The enzyme catalyses 5-amino-1-(5-phospho-D-ribosyl)imidazole-4-carboxylate + L-aspartate + ATP = (2S)-2-[5-amino-1-(5-phospho-beta-D-ribosyl)imidazole-4-carboxamido]succinate + ADP + phosphate + 2 H(+). It catalyses the reaction 5-amino-1-(5-phospho-D-ribosyl)imidazole-4-carboxylate + H(+) = 5-amino-1-(5-phospho-beta-D-ribosyl)imidazole + CO2. Its pathway is purine metabolism; IMP biosynthesis via de novo pathway; 5-amino-1-(5-phospho-D-ribosyl)imidazole-4-carboxamide from 5-amino-1-(5-phospho-D-ribosyl)imidazole-4-carboxylate: step 1/2. The protein operates within purine metabolism; IMP biosynthesis via de novo pathway; 5-amino-1-(5-phospho-D-ribosyl)imidazole-4-carboxylate from 5-amino-1-(5-phospho-D-ribosyl)imidazole (carboxylase route): step 1/1. Its function is as follows. Bifunctional phosphoribosylaminoimidazole carboxylase and phosphoribosylaminoimidazole succinocarboxamide synthetase catalyzing two reactions of the de novo purine biosynthetic pathway. The protein is Bifunctional phosphoribosylaminoimidazole carboxylase/phosphoribosylaminoimidazole succinocarboxamide synthetase of Rattus norvegicus (Rat).